A 438-amino-acid chain; its full sequence is tRNA modification GTPase MnmE (438 aa).

Residues arginine 20, glutamate 78, and lysine 117 each coordinate (6S)-5-formyl-5,6,7,8-tetrahydrofolate. A TrmE-type G domain is found at 214-359 (GIRVLIIGKP…LIDEIKKLFY (146 aa)). K(+) is bound at residue asparagine 224. Residues 224 to 229 (NVGKST), 243 to 249 (TDIPGTT), and 268 to 271 (DTAG) each bind GTP. Serine 228 contacts Mg(2+). K(+) is bound by residues threonine 243, isoleucine 245, and threonine 248. Threonine 249 serves as a coordination point for Mg(2+). Position 438 (lysine 438) interacts with (6S)-5-formyl-5,6,7,8-tetrahydrofolate.

This sequence belongs to the TRAFAC class TrmE-Era-EngA-EngB-Septin-like GTPase superfamily. TrmE GTPase family. In terms of assembly, homodimer. Heterotetramer of two MnmE and two MnmG subunits. It depends on K(+) as a cofactor.

It localises to the cytoplasm. In terms of biological role, exhibits a very high intrinsic GTPase hydrolysis rate. Involved in the addition of a carboxymethylaminomethyl (cmnm) group at the wobble position (U34) of certain tRNAs, forming tRNA-cmnm(5)s(2)U34. This Ureaplasma parvum serovar 3 (strain ATCC 27815 / 27 / NCTC 11736) protein is tRNA modification GTPase MnmE.